The chain runs to 730 residues: Matrix metalloproteinase-9 (730 aa).

An N-terminal signal peptide occupies residues 1–19 (MSPWQPLLLALLAFGCSSA). Positions 20 to 107 (APYQRQPTFV…PRCGVPDVGR (88 aa)) are cleaved as a propeptide — activation peptide. The N-linked (GlcNAc...) asparagine glycan is linked to N39. The Cysteine switch signature appears at 98-105 (PRCGVPDV). C100 is a Zn(2+) binding site. N-linked (GlcNAc...) asparagine glycans are attached at residues N120 and N127. Residues D131 and D165 each coordinate Ca(2+). Positions 175 and 177 each coordinate Zn(2+). 4 residues coordinate Ca(2+): D182, G183, D185, and L187. Residue H190 participates in Zn(2+) binding. Ca(2+)-binding residues include G197, Q199, and D201. H203 is a binding site for Zn(2+). The Ca(2+) site is built by D205, D206, and E208. 3 Fibronectin type-II domains span residues 225-273 (SNGA…FCPS), 283-331 (GEGK…FCPT), and 342-390 (SAGE…FCPD). 6 disulfides stabilise this stretch: C230/C256, C244/C271, C288/C314, C302/C329, C347/C373, and C361/C388. H401 contacts Zn(2+). E402 is a catalytic residue. Zn(2+) contacts are provided by H405 and H411. The interval 442 to 529 (LYGRGSKPDP…SEASTESLSP (88 aa)) is disordered. A compositionally biased stretch (pro residues) spans 463 to 477 (PTAPPTMCPTIPPTA). Over residues 478–489 (YPTVGPTVGPTG) the composition is skewed to low complexity. Residues 490–514 (APSPGPTSSPSPGPTGAPSPGPTAP) are compositionally biased toward pro residues. A disulfide bridge links C534 with C729. 4 Hemopexin repeats span residues 536-581 (VDVF…WPAL), 582-626 (PATL…GLGP), 628-675 (VTHV…FSGV), and 676-729 (PWNS…LLQC).

Belongs to the peptidase M10A family. Exists as monomer or homodimer; disulfide-linked. Also exists as heterodimer with LCN2. Macrophages and transformed cell lines produce only the monomeric form. Interacts with ECM1. The cofactor is Zn(2+). Requires Ca(2+) as cofactor. N- and O-glycosylated.

Its subcellular location is the secreted. It localises to the extracellular space. The protein resides in the extracellular matrix. It carries out the reaction Cleavage of gelatin types I and V and collagen types IV and V.. Its activity is regulated as follows. Inhibited by histatin-3 1/24 (histatin-5). Inhibited by ECM1. Matrix metalloproteinase that plays an essential role in local proteolysis of the extracellular matrix and in leukocyte migration. Could play a role in bone osteoclastic resorption. Cleaves KiSS1 at a Gly-|-Leu bond. Cleaves NINJ1 to generate the Secreted ninjurin-1 form. Cleaves type IV and type V collagen into large C-terminal three quarter fragments and shorter N-terminal one quarter fragments. Degrades fibronectin but not laminin or Pz-peptide. The sequence is that of Matrix metalloproteinase-9 (Mmp9) from Mus musculus (Mouse).